The following is a 344-amino-acid chain: tRNA(Ile)-lysidine synthase (344 aa).

35 to 40 (SGGPDS) lines the ATP pocket.

Belongs to the tRNA(Ile)-lysidine synthase family.

The protein localises to the cytoplasm. It catalyses the reaction cytidine(34) in tRNA(Ile2) + L-lysine + ATP = lysidine(34) in tRNA(Ile2) + AMP + diphosphate + H(+). Ligates lysine onto the cytidine present at position 34 of the AUA codon-specific tRNA(Ile) that contains the anticodon CAU, in an ATP-dependent manner. Cytidine is converted to lysidine, thus changing the amino acid specificity of the tRNA from methionine to isoleucine. In Methylobacterium sp. (strain 4-46), this protein is tRNA(Ile)-lysidine synthase.